The sequence spans 498 residues: ATP synthase subunit beta, chloroplastic (498 aa).

An ATP-binding site is contributed by 172-179; the sequence is GGAGVGKT.

This sequence belongs to the ATPase alpha/beta chains family. As to quaternary structure, F-type ATPases have 2 components, CF(1) - the catalytic core - and CF(0) - the membrane proton channel. CF(1) has five subunits: alpha(3), beta(3), gamma(1), delta(1), epsilon(1). CF(0) has four main subunits: a(1), b(1), b'(1) and c(9-12).

Its subcellular location is the plastid. The protein resides in the chloroplast thylakoid membrane. The enzyme catalyses ATP + H2O + 4 H(+)(in) = ADP + phosphate + 5 H(+)(out). Its function is as follows. Produces ATP from ADP in the presence of a proton gradient across the membrane. The catalytic sites are hosted primarily by the beta subunits. The protein is ATP synthase subunit beta, chloroplastic of Licuala grandis (Ruffled fan palm).